Reading from the N-terminus, the 472-residue chain is UDP-N-acetylmuramoyl-L-alanyl-D-glutamate--2,6-diaminopimelate ligase (472 aa).

Position 21 (S21) interacts with UDP-N-acetyl-alpha-D-muramoyl-L-alanyl-D-glutamate. 99–105 (GTNGKTS) is an ATP binding site. Residues 143-144 (TT), S170, Q176, and R178 contribute to the UDP-N-acetyl-alpha-D-muramoyl-L-alanyl-D-glutamate site. The residue at position 210 (K210) is an N6-carboxylysine. Meso-2,6-diaminopimelate is bound by residues R367, 391–394 (DNPR), G440, and E444. The short motif at 391-394 (DNPR) is the Meso-diaminopimelate recognition motif element.

The protein belongs to the MurCDEF family. MurE subfamily. Mg(2+) is required as a cofactor. Carboxylation is probably crucial for Mg(2+) binding and, consequently, for the gamma-phosphate positioning of ATP.

The protein localises to the cytoplasm. It catalyses the reaction UDP-N-acetyl-alpha-D-muramoyl-L-alanyl-D-glutamate + meso-2,6-diaminopimelate + ATP = UDP-N-acetyl-alpha-D-muramoyl-L-alanyl-gamma-D-glutamyl-meso-2,6-diaminopimelate + ADP + phosphate + H(+). Its pathway is cell wall biogenesis; peptidoglycan biosynthesis. Functionally, catalyzes the addition of meso-diaminopimelic acid to the nucleotide precursor UDP-N-acetylmuramoyl-L-alanyl-D-glutamate (UMAG) in the biosynthesis of bacterial cell-wall peptidoglycan. This chain is UDP-N-acetylmuramoyl-L-alanyl-D-glutamate--2,6-diaminopimelate ligase, found in Anaplasma marginale (strain St. Maries).